A 344-amino-acid chain; its full sequence is Phosphoserine phosphatase (344 aa).

The ACT domain maps to 48 to 120; it reads VVTILGKDRV…ERLGLDIVMQ (73 aa). Aspartate 135 functions as the Nucleophile in the catalytic mechanism. Residues aspartate 135 and aspartate 137 each coordinate Mg(2+). Aspartate 137 (proton donor) is an active-site residue. Substrate-binding positions include glutamate 144, arginine 180, 223–224, and lysine 268; that span reads SG. Mg(2+) is bound at residue aspartate 291.

The protein belongs to the HAD-like hydrolase superfamily. SerB family. It depends on Mg(2+) as a cofactor.

The catalysed reaction is O-phospho-L-serine + H2O = L-serine + phosphate. It carries out the reaction O-phospho-D-serine + H2O = D-serine + phosphate. It participates in amino-acid biosynthesis; L-serine biosynthesis; L-serine from 3-phospho-D-glycerate: step 3/3. The protein is Phosphoserine phosphatase of Archaeoglobus fulgidus (strain ATCC 49558 / DSM 4304 / JCM 9628 / NBRC 100126 / VC-16).